The following is a 147-amino-acid chain: Plasminogen receptor (KT) (147 aa).

At 1 to 52 (MGFIFSKSMNESMKNQKEFMLMNARLQLERQLIMQSEMRERQMAMQIAWSRE) the chain is on the extracellular side. A helical membrane pass occupies residues 53-73 (FLKYFGTFFGLAAISLTAGAI). Over 74–78 (KKKKP) the chain is Cytoplasmic. A helical transmembrane segment spans residues 79 to 99 (AFLVPIVPLSFILTYQYDLGY). The Extracellular portion of the chain corresponds to 100 to 147 (GTLLERMKGEAEDILETEKSKLQLPRGMITFESIEKARKEQSRFFIDK).

As to quaternary structure, interacts with PLAT and PLAUR. In terms of tissue distribution, expressed in peripheral blood cells and monocytes. Expressed in adrenal medulla.

The protein localises to the cell membrane. Its function is as follows. Receptor for plasminogen. Regulates urokinase plasminogen activator-dependent and stimulates tissue-type plasminogen activator-dependent cell surface plasminogen activation. Proposed to be part of a local catecholaminergic cell plasminogen activation system that regulates neuroendocrine prohormone processing. Involved in regulation of inflammatory response; regulates monocyte chemotactic migration and matrix metalloproteinase activation, such as of MMP2 and MMP9. This chain is Plasminogen receptor (KT) (PLGRKT), found in Homo sapiens (Human).